The primary structure comprises 383 residues: GTP-binding protein 10 (383 aa).

The 136-residue stretch at 13–148 folds into the Obg domain; that stretch reads GNFIDNLRIY…RIIHLDLKLI (136 aa). An OBG-type G domain is found at 149 to 344; that stretch reads SDVGLVGFPN…LIGCIRKTMD (196 aa). GTP-binding positions include 155–162, 202–206, and 278–281; these read GFPNAGKS, DLPGL, and NKMD. The disordered stretch occupies residues 362–383; the sequence is LQKETSRTVKRNLKNSPQRTHH. Basic residues predominate over residues 369 to 383; that stretch reads TVKRNLKNSPQRTHH.

Belongs to the TRAFAC class OBG-HflX-like GTPase superfamily. OBG GTPase family.

It localises to the nucleus. The protein localises to the nucleolus. In terms of biological role, may be involved in the ribosome maturation process. The protein is GTP-binding protein 10 (gtpbp10) of Xenopus tropicalis (Western clawed frog).